The sequence spans 223 residues: Adenylate kinase (223 aa).

10 to 15 (GSGKGT) is an ATP binding site. The NMP stretch occupies residues 30–59 (ESGAIFREHIGGGTELGKQAKAFIERGDLV). Residues Ser31, Arg36, 57–59 (DLV), 84–87 (GFPR), and Gln91 contribute to the AMP site. Positions 125 to 164 (GRRLCKNDNNHPNNIFIDAIKPNGDVCRVCGGELSARSDD) are LID. Arg126 contributes to the ATP binding site. AMP-binding residues include Arg161 and Arg173. ATP is bound at residue Gly209.

Belongs to the adenylate kinase family. Monomer.

Its subcellular location is the cytoplasm. It catalyses the reaction AMP + ATP = 2 ADP. It participates in purine metabolism; AMP biosynthesis via salvage pathway; AMP from ADP: step 1/1. Functionally, catalyzes the reversible transfer of the terminal phosphate group between ATP and AMP. Plays an important role in cellular energy homeostasis and in adenine nucleotide metabolism. This chain is Adenylate kinase, found in Nitratidesulfovibrio vulgaris (strain ATCC 29579 / DSM 644 / CCUG 34227 / NCIMB 8303 / VKM B-1760 / Hildenborough) (Desulfovibrio vulgaris).